Reading from the N-terminus, the 196-residue chain is GTP cyclohydrolase-2 (196 aa).

49–53 (RVHSE) contributes to the GTP binding site. Residues Cys54, Cys65, and Cys67 each contribute to the Zn(2+) site. Residues Gln70, 92–94 (EGR), and Thr114 each bind GTP. Asp126 functions as the Proton acceptor in the catalytic mechanism. The Nucleophile role is filled by Arg128. Positions 149 and 154 each coordinate GTP.

It belongs to the GTP cyclohydrolase II family. Homodimer. Requires Zn(2+) as cofactor.

The catalysed reaction is GTP + 4 H2O = 2,5-diamino-6-hydroxy-4-(5-phosphoribosylamino)-pyrimidine + formate + 2 phosphate + 3 H(+). Its pathway is cofactor biosynthesis; riboflavin biosynthesis; 5-amino-6-(D-ribitylamino)uracil from GTP: step 1/4. Its function is as follows. Catalyzes the conversion of GTP to 2,5-diamino-6-ribosylamino-4(3H)-pyrimidinone 5'-phosphate (DARP), formate and pyrophosphate. The protein is GTP cyclohydrolase-2 of Escherichia coli O127:H6 (strain E2348/69 / EPEC).